The primary structure comprises 365 residues: Peptide chain release factor 1 (365 aa).

N5-methylglutamine is present on Q236.

It belongs to the prokaryotic/mitochondrial release factor family. In terms of processing, methylated by PrmC. Methylation increases the termination efficiency of RF1.

Its subcellular location is the cytoplasm. Its function is as follows. Peptide chain release factor 1 directs the termination of translation in response to the peptide chain termination codons UAG and UAA. The chain is Peptide chain release factor 1 from Latilactobacillus sakei subsp. sakei (strain 23K) (Lactobacillus sakei subsp. sakei).